Reading from the N-terminus, the 403-residue chain is Queuine tRNA-ribosyltransferase catalytic subunit 1 (403 aa).

A2 is modified (N-acetylalanine). D105 serves as the catalytic Proton acceptor. Residue 105–109 (DSGGF) participates in queuine binding. Position 139 is a phosphoserine (S139). The queuine site is built by D159, Q202, and G229. The segment at 260–266 (GVGYATD) is RNA binding. The active-site Nucleophile is D279. An RNA binding; important for wobble base 34 recognition region spans residues 284-288 (TRTAR). Residues C317, C319, C322, and H348 each contribute to the Zn(2+) site.

This sequence belongs to the queuine tRNA-ribosyltransferase family. Heterodimer of a catalytic subunit QTRT1 and an accessory subunit QTRT2. Zn(2+) serves as cofactor. Expressed in brain, heart, kidney, liver, ling, skeletal muscle, spleen and testis.

The protein localises to the cytoplasm. It localises to the mitochondrion outer membrane. It is found in the nucleus. It carries out the reaction guanosine(34) in tRNA + queuine = queuosine(34) in tRNA + guanine. Functionally, catalytic subunit of the queuine tRNA-ribosyltransferase (TGT) that catalyzes the base-exchange of a guanine (G) residue with queuine (Q) at position 34 (anticodon wobble position) in tRNAs with GU(N) anticodons (tRNA-Asp, -Asn, -His and -Tyr), resulting in the hypermodified nucleoside queuosine (7-(((4,5-cis-dihydroxy-2-cyclopenten-1-yl)amino)methyl)-7-deazaguanosine). Catalysis occurs through a double-displacement mechanism. The nucleophile active site attacks the C1' of nucleotide 34 to detach the guanine base from the RNA, forming a covalent enzyme-RNA intermediate. The proton acceptor active site deprotonates the incoming queuine, allowing a nucleophilic attack on the C1' of the ribose to form the product. Modification of cytoplasmic tRNAs with queuosine controls the elongation speed of cognate codons, thereby ensuring the correct folding of nascent proteins to maintain proteome integrity. The protein is Queuine tRNA-ribosyltransferase catalytic subunit 1 of Mus musculus (Mouse).